Here is a 212-residue protein sequence, read N- to C-terminus: Methylthioribulose-1-phosphate dehydratase (212 aa).

Positions 99 and 101 each coordinate Zn(2+).

The protein belongs to the aldolase class II family. MtnB subfamily. Homotetramer. Requires Zn(2+) as cofactor.

It carries out the reaction 5-(methylsulfanyl)-D-ribulose 1-phosphate = 5-methylsulfanyl-2,3-dioxopentyl phosphate + H2O. The protein operates within amino-acid biosynthesis; L-methionine biosynthesis via salvage pathway; L-methionine from S-methyl-5-thio-alpha-D-ribose 1-phosphate: step 2/6. Functionally, catalyzes the dehydration of methylthioribulose-1-phosphate (MTRu-1-P) into 2,3-diketo-5-methylthiopentyl-1-phosphate (DK-MTP-1-P). This Bacillus pumilus (strain SAFR-032) protein is Methylthioribulose-1-phosphate dehydratase.